The chain runs to 306 residues: MKSIQVQQLVEEFNLEVLAGEDHRERTITKSRTHRPGLEFIGYFDFFPMERVQILGKKEINYLHQLNEQERDIRIGNVVNYHPPCFIVTSDQDGLTYLKKYCHAEQIPLLRTKEATVDFMAKVDHYLTRKLAPEIAVHGVCMNVLGIGILIRGESGVGKSELAHTLLGRGHRLVADDIVVLKRLSHKTILGTHNDKNKEFLALRSVGLLNVVRAYGSRAFQDETRISLDIKLSKWEKDSLHNELEFETQYRDYMGVSVPSIEIQLQPGRDVAGLIEAAANNWYLQQQGYSAAEDFMNRIEWQDGDD.

Residues histidine 138 and lysine 159 contribute to the active site. Residue 153–160 (GESGVGKS) participates in ATP binding. Mg(2+) is bound at residue serine 160. Aspartate 177 acts as the Proton acceptor; for phosphorylation activity. Proton donor; for dephosphorylation activity in catalysis. The interval 201 to 210 (LALRSVGLLN) is important for the catalytic mechanism of both phosphorylation and dephosphorylation. Residues 264–269 (QLQPGR) are important for the catalytic mechanism of dephosphorylation.

This sequence belongs to the HPrK/P family. In terms of assembly, homohexamer. Mg(2+) serves as cofactor.

It carries out the reaction [HPr protein]-L-serine + ATP = [HPr protein]-O-phospho-L-serine + ADP + H(+). It catalyses the reaction [HPr protein]-O-phospho-L-serine + phosphate + H(+) = [HPr protein]-L-serine + diphosphate. Catalyzes the ATP- as well as the pyrophosphate-dependent phosphorylation of a specific serine residue in HPr, a phosphocarrier protein of the phosphoenolpyruvate-dependent sugar phosphotransferase system (PTS). HprK/P also catalyzes the pyrophosphate-producing, inorganic phosphate-dependent dephosphorylation (phosphorolysis) of seryl-phosphorylated HPr (P-Ser-HPr). The two antagonistic activities of HprK/P are regulated by several intracellular metabolites, which change their concentration in response to the absence or presence of rapidly metabolisable carbon sources (glucose, fructose, etc.) in the growth medium. Also phosphorylates/dephosphorylates the HPr-like catabolite repression protein crh on a specific serine residue. Therefore, by controlling the phosphorylation state of HPr and crh, HPrK/P is a sensor enzyme that plays a major role in the regulation of carbon metabolism and sugar transport: it mediates carbon catabolite repression (CCR), and regulates PTS-catalyzed carbohydrate uptake and inducer exclusion. This is Putative HPr kinase/phosphorylase 2 (hprK2) from Oceanobacillus iheyensis (strain DSM 14371 / CIP 107618 / JCM 11309 / KCTC 3954 / HTE831).